The following is a 537-amino-acid chain: CTP synthase (537 aa).

Residues 1–268 (MGETKYIFVT…DSTILEKMGL (268 aa)) form an amidoligase domain region. Residue serine 15 participates in CTP binding. Serine 15 is a UTP binding site. 16–21 (SLGKGI) is a binding site for ATP. Tyrosine 56 serves as a coordination point for L-glutamine. Aspartate 73 contributes to the ATP binding site. Aspartate 73 and glutamate 143 together coordinate Mg(2+). Residues 150–152 (DIE), 189–194 (KTKPTQ), and lysine 225 each bind CTP. Residues 189–194 (KTKPTQ) and lysine 225 contribute to the UTP site. One can recognise a Glutamine amidotransferase type-1 domain in the interval 296 to 537 (NIALVGKYDL…VKAAIENEKN (242 aa)). Glycine 357 contacts L-glutamine. Cysteine 384 functions as the Nucleophile; for glutamine hydrolysis in the catalytic mechanism. L-glutamine-binding positions include 385 to 388 (LGMQ), glutamate 408, and arginine 465. Active-site residues include histidine 510 and glutamate 512.

This sequence belongs to the CTP synthase family. As to quaternary structure, homotetramer.

It carries out the reaction UTP + L-glutamine + ATP + H2O = CTP + L-glutamate + ADP + phosphate + 2 H(+). It catalyses the reaction L-glutamine + H2O = L-glutamate + NH4(+). The catalysed reaction is UTP + NH4(+) + ATP = CTP + ADP + phosphate + 2 H(+). The protein operates within pyrimidine metabolism; CTP biosynthesis via de novo pathway; CTP from UDP: step 2/2. With respect to regulation, allosterically activated by GTP, when glutamine is the substrate; GTP has no effect on the reaction when ammonia is the substrate. The allosteric effector GTP functions by stabilizing the protein conformation that binds the tetrahedral intermediate(s) formed during glutamine hydrolysis. Inhibited by the product CTP, via allosteric rather than competitive inhibition. Functionally, catalyzes the ATP-dependent amination of UTP to CTP with either L-glutamine or ammonia as the source of nitrogen. Regulates intracellular CTP levels through interactions with the four ribonucleotide triphosphates. The protein is CTP synthase of Bacteroides thetaiotaomicron (strain ATCC 29148 / DSM 2079 / JCM 5827 / CCUG 10774 / NCTC 10582 / VPI-5482 / E50).